Reading from the N-terminus, the 571-residue chain is MESNMQNLLEKLRPLVGARAWDYCVLWRLNEDQRFVKWMGCCCGGTELIAENGTEEFSYGGCRDVMFHHPRTKSCEFLSHLPASIPLDSGIYAETLLTNQTGWLSESSEPSFMQETICTRVLIPIPGGLVELFATRHVAEDQNVVDFVMGHCNMLMDDSVTINMMVADEVESKPYGMLSGDIQQKGSKEEDMMNLPSSYDISADQIRLNFLPQMSDYETQHLKMKSDYHHQALGYLPENGNKEMMGMNPFNTVEEDGIPVIGEPSLLVNEQQVVNDKDMNENGRVDSGSDCSDQIDDEDDPKYKKKSGKGSQAKNLMAERRRRKKLNDRLYALRSLVPRITKLDRASILGDAINYVKELQNEAKELQDELEENSETEDGSNRPQGGMSLNGTVVTGFHPGLSCNSNVPSVKQDVDLENSNDKGQEMEPQVDVAQLDGREFFVKVICEYKPGGFTRLMEALDSLGLEVTNANTTRYLSLVSNVFKVEKNDNEMVQAEHVRNSLLEITRNTSRGWQDDQMATGSMQNEKNEVDYQHYDDHQHHNGHHHPFDHQMNQSAHHHHHHQHINHYHNQ.

Basic and acidic residues predominate over residues 275 to 284 (NDKDMNENGR). Disordered stretches follow at residues 275 to 321 (NDKD…AERR), 365 to 390 (ELQD…MSLN), and 536 to 571 (DDHQ…YHNQ). Residues 310-359 (GSQAKNLMAERRRRKKLNDRLYALRSLVPRITKLDRASILGDAINYVKEL) form the bHLH domain. Over residues 368–378 (DELEENSETED) the composition is skewed to acidic residues. Residues 381 to 390 (NRPQGGMSLN) show a composition bias toward polar residues. Basic residues predominate over residues 556–571 (AHHHHHHQHINHYHNQ).

As to quaternary structure, homodimer. Interacts with ASHR3. In terms of tissue distribution, mostly expressed in closed, post-meiotic buds, and, to a lower extent, in pre-meiotic buds. Detected in leaves, stems, and flowers.

It localises to the nucleus. In terms of biological role, transcription factor. Plays a crucial role in tapetum development. Required for male fertility and pollen differentiation, especially during the post-meiotic transcriptional regulation of microspore development within the developing anther. Binds E-box regions in the AHL16/TEK promoter. The polypeptide is Transcription factor ABORTED MICROSPORES (AMS) (Arabidopsis thaliana (Mouse-ear cress)).